Here is a 277-residue protein sequence, read N- to C-terminus: Proteasome subunit beta type-7 (277 aa).

Residues 1–43 (MAAVSVFQAPVGGFSFDNCRRNAVLEADFAKKGFKLPKARKTG) constitute a propeptide, removed in mature form. The Nucleophile role is filled by Thr44.

The protein belongs to the peptidase T1B family. The 26S proteasome consists of a 20S proteasome core and two 19S regulatory subunits. The 20S proteasome core is a barrel-shaped complex made of 28 subunits that are arranged in four stacked rings. The two outer rings are each formed by seven alpha subunits, and the two inner rings are formed by seven beta subunits. The proteolytic activity is exerted by three beta-subunits PSMB5, PSMB6 and PSMB7.

Its subcellular location is the cytoplasm. The protein resides in the nucleus. It carries out the reaction Cleavage of peptide bonds with very broad specificity.. In terms of biological role, component of the 20S core proteasome complex involved in the proteolytic degradation of most intracellular proteins. This complex plays numerous essential roles within the cell by associating with different regulatory particles. Associated with two 19S regulatory particles, forms the 26S proteasome and thus participates in the ATP-dependent degradation of ubiquitinated proteins. The 26S proteasome plays a key role in the maintenance of protein homeostasis by removing misfolded or damaged proteins that could impair cellular functions, and by removing proteins whose functions are no longer required. Associated with the PA200 or PA28, the 20S proteasome mediates ubiquitin-independent protein degradation. This type of proteolysis is required in several pathways including spermatogenesis (20S-PA200 complex) or generation of a subset of MHC class I-presented antigenic peptides (20S-PA28 complex). Within the 20S core complex, PSMB7 displays a trypsin-like activity. The polypeptide is Proteasome subunit beta type-7 (Psmb7) (Rattus norvegicus (Rat)).